We begin with the raw amino-acid sequence, 424 residues long: Adenylosuccinate synthetase 2 (424 aa).

GTP is bound by residues 11 to 17 and 39 to 41; these read GDEGKGK and GHT. Catalysis depends on Asp12, which acts as the Proton acceptor. Residues Asp12 and Gly39 each coordinate Mg(2+). IMP is bound by residues 12–15, 37–40, Thr127, Arg141, Gln223, Thr238, and Arg302; these read DEGK and NAGH. His40 acts as the Proton donor in catalysis. 298-304 provides a ligand contact to substrate; that stretch reads TTTGRGR. Residues Arg304, 330 to 332, and 412 to 414 each bind GTP; these read KLD and SVG.

The protein belongs to the adenylosuccinate synthetase family. In terms of assembly, homodimer. The cofactor is Mg(2+).

Its subcellular location is the cytoplasm. It carries out the reaction IMP + L-aspartate + GTP = N(6)-(1,2-dicarboxyethyl)-AMP + GDP + phosphate + 2 H(+). The protein operates within purine metabolism; AMP biosynthesis via de novo pathway; AMP from IMP: step 1/2. In terms of biological role, plays an important role in the de novo pathway of purine nucleotide biosynthesis. Catalyzes the first committed step in the biosynthesis of AMP from IMP. This chain is Adenylosuccinate synthetase 2, found in Methanosarcina acetivorans (strain ATCC 35395 / DSM 2834 / JCM 12185 / C2A).